We begin with the raw amino-acid sequence, 429 residues long: 3-phosphoshikimate 1-carboxyvinyltransferase (429 aa).

The 3-phosphoshikimate site is built by lysine 23, serine 24, and arginine 28. Lysine 23 lines the phosphoenolpyruvate pocket. Residues glycine 95 and arginine 123 each coordinate phosphoenolpyruvate. 3-phosphoshikimate contacts are provided by serine 168, glutamine 170, aspartate 316, and lysine 343. Glutamine 170 is a phosphoenolpyruvate binding site. Aspartate 316 (proton acceptor) is an active-site residue. Residues arginine 347 and arginine 389 each contribute to the phosphoenolpyruvate site.

It belongs to the EPSP synthase family. As to quaternary structure, monomer.

It is found in the cytoplasm. The enzyme catalyses 3-phosphoshikimate + phosphoenolpyruvate = 5-O-(1-carboxyvinyl)-3-phosphoshikimate + phosphate. The protein operates within metabolic intermediate biosynthesis; chorismate biosynthesis; chorismate from D-erythrose 4-phosphate and phosphoenolpyruvate: step 6/7. Catalyzes the transfer of the enolpyruvyl moiety of phosphoenolpyruvate (PEP) to the 5-hydroxyl of shikimate-3-phosphate (S3P) to produce enolpyruvyl shikimate-3-phosphate and inorganic phosphate. The protein is 3-phosphoshikimate 1-carboxyvinyltransferase of Oceanobacillus iheyensis (strain DSM 14371 / CIP 107618 / JCM 11309 / KCTC 3954 / HTE831).